The sequence spans 284 residues: Malonyl-[acyl-carrier protein] O-methyltransferase (284 aa).

Belongs to the methyltransferase superfamily.

The enzyme catalyses malonyl-[ACP] + S-adenosyl-L-methionine = malonyl-[ACP] methyl ester + S-adenosyl-L-homocysteine. Its pathway is cofactor biosynthesis; biotin biosynthesis. Converts the free carboxyl group of a malonyl-thioester to its methyl ester by transfer of a methyl group from S-adenosyl-L-methionine (SAM). It allows to synthesize pimeloyl-ACP via the fatty acid synthetic pathway. The chain is Malonyl-[acyl-carrier protein] O-methyltransferase from Legionella pneumophila subsp. pneumophila (strain Philadelphia 1 / ATCC 33152 / DSM 7513).